The following is a 256-amino-acid chain: Major prion protein (256 aa).

A signal peptide spans methionine 1 to cysteine 24. The interaction with GRB2, ERI3 and SYN1 stretch occupies residues lysine 25–alanine 233. The tract at residues proline 28–threonine 110 is disordered. 5 tandem repeats follow at residues proline 54–glutamine 62, proline 63–glutamine 70, proline 71–glutamine 78, proline 79–glutamine 86, and proline 87–glutamine 95. The segment at proline 54–glutamine 95 is 5 X 8 AA tandem repeats of P-H-G-G-G-W-G-Q. Residues glutamine 55–glycine 97 show a composition bias toward gly residues. 12 residues coordinate Cu(2+): histidine 64, glycine 65, glycine 66, histidine 72, glycine 73, glycine 74, histidine 80, glycine 81, glycine 82, histidine 88, glycine 90, and glycine 91. The cysteines at positions 182 and 217 are disulfide-linked. 2 N-linked (GlcNAc...) asparagine glycosylation sites follow: asparagine 184 and asparagine 200. Residue alanine 233 is the site of GPI-anchor amidated alanine attachment. Residues serine 234–glycine 256 constitute a propeptide, removed in mature form.

This sequence belongs to the prion family. Monomer and homodimer. Has a tendency to aggregate into amyloid fibrils containing a cross-beta spine, formed by a steric zipper of superposed beta-strands. Soluble oligomers may represent an intermediate stage on the path to fibril formation. Copper binding may promote oligomerization. Interacts with GRB2, APP, ERI3/PRNPIP and SYN1. Mislocalized cytosolically exposed PrP interacts with MGRN1; this interaction alters MGRN1 subcellular location and causes lysosomal enlargement. Interacts with KIAA1191.

The protein resides in the cell membrane. It localises to the golgi apparatus. Its function is as follows. Its primary physiological function is unclear. Has cytoprotective activity against internal or environmental stresses. May play a role in neuronal development and synaptic plasticity. May be required for neuronal myelin sheath maintenance. May play a role in iron uptake and iron homeostasis. Soluble oligomers are toxic to cultured neuroblastoma cells and induce apoptosis (in vitro). Association with GPC1 (via its heparan sulfate chains) targets PRNP to lipid rafts. Also provides Cu(2+) or Zn(2+) for the ascorbate-mediated GPC1 deaminase degradation of its heparan sulfate side chains. The sequence is that of Major prion protein (PRNP) from Ovis canadensis (Bighorn sheep).